The chain runs to 804 residues: DNA gyrase subunit A (804 aa).

Positions 31–495 (IPDVRDGLKP…QSIEYNEEEL (465 aa)) constitute a Topo IIA-type catalytic domain. Residue Y119 is the O-(5'-phospho-DNA)-tyrosine intermediate of the active site. The GyrA-box signature appears at 522–528 (QKRGGKG).

This sequence belongs to the type II topoisomerase GyrA/ParC subunit family. Heterotetramer, composed of two GyrA and two GyrB chains. In the heterotetramer, GyrA contains the active site tyrosine that forms a transient covalent intermediate with DNA, while GyrB binds cofactors and catalyzes ATP hydrolysis.

The protein localises to the cytoplasm. It catalyses the reaction ATP-dependent breakage, passage and rejoining of double-stranded DNA.. Functionally, a type II topoisomerase that negatively supercoils closed circular double-stranded (ds) DNA in an ATP-dependent manner to modulate DNA topology and maintain chromosomes in an underwound state. Negative supercoiling favors strand separation, and DNA replication, transcription, recombination and repair, all of which involve strand separation. Also able to catalyze the interconversion of other topological isomers of dsDNA rings, including catenanes and knotted rings. Type II topoisomerases break and join 2 DNA strands simultaneously in an ATP-dependent manner. This chain is DNA gyrase subunit A, found in Thermotoga maritima (strain ATCC 43589 / DSM 3109 / JCM 10099 / NBRC 100826 / MSB8).